A 167-amino-acid chain; its full sequence is Peptidyl-prolyl cis-trans isomerase-like 3 (167 aa).

One can recognise a PPIase cyclophilin-type domain in the interval 1-160 (MSVTLHTTLG…EEVRIERVTV (160 aa)).

This sequence belongs to the cyclophilin-type PPIase family. PPIL3 subfamily.

It catalyses the reaction [protein]-peptidylproline (omega=180) = [protein]-peptidylproline (omega=0). Functionally, PPIases accelerate the folding of proteins. It catalyzes the cis-trans isomerization of proline imidic peptide bonds in oligopeptides. The polypeptide is Peptidyl-prolyl cis-trans isomerase-like 3 (cyp-10) (Neurospora crassa (strain ATCC 24698 / 74-OR23-1A / CBS 708.71 / DSM 1257 / FGSC 987)).